We begin with the raw amino-acid sequence, 83 residues long: uncharacterized protein (83 aa).

The chain crosses the membrane as a helical span at residues 58 to 80 (YWGYGAAYGISLGLIAGVALAGL).

It localises to the membrane. This is an uncharacterized protein from Bacillus subtilis (strain 168).